The chain runs to 315 residues: Putative methyltransferase NSUN5C (315 aa).

Residues 50-56 (VPPQAIK), aspartate 74, arginine 79, and aspartate 121 contribute to the S-adenosyl-L-methionine site. Cysteine 175 functions as the Nucleophile in the catalytic mechanism. Residues 245–269 (TSASQAKASAPERTPSPAPKRKKRA) form a disordered region.

Belongs to the class I-like SAM-binding methyltransferase superfamily. RsmB/NOP family. As to expression, ubiquitous.

In terms of biological role, may have S-adenosyl-L-methionine-dependent methyl-transferase activity. This chain is Putative methyltransferase NSUN5C (NSUN5P2), found in Homo sapiens (Human).